The chain runs to 211 residues: Pyridoxine/pyridoxamine 5'-phosphate oxidase (211 aa).

Residues 7-10 (RREY) and Lys65 contribute to the substrate site. FMN-binding positions include 60 to 65 (RIVLLK), 75 to 76 (FT), Lys82, and Gln104. 3 residues coordinate substrate: Tyr122, Arg126, and Ser130. FMN is bound by residues 139–140 (QS) and Trp184. 190–192 (RLH) is a binding site for substrate. Arg194 lines the FMN pocket.

It belongs to the pyridoxamine 5'-phosphate oxidase family. In terms of assembly, homodimer. The cofactor is FMN.

The catalysed reaction is pyridoxamine 5'-phosphate + O2 + H2O = pyridoxal 5'-phosphate + H2O2 + NH4(+). It catalyses the reaction pyridoxine 5'-phosphate + O2 = pyridoxal 5'-phosphate + H2O2. It functions in the pathway cofactor metabolism; pyridoxal 5'-phosphate salvage; pyridoxal 5'-phosphate from pyridoxamine 5'-phosphate: step 1/1. Its pathway is cofactor metabolism; pyridoxal 5'-phosphate salvage; pyridoxal 5'-phosphate from pyridoxine 5'-phosphate: step 1/1. In terms of biological role, catalyzes the oxidation of either pyridoxine 5'-phosphate (PNP) or pyridoxamine 5'-phosphate (PMP) into pyridoxal 5'-phosphate (PLP). In Teredinibacter turnerae (strain ATCC 39867 / T7901), this protein is Pyridoxine/pyridoxamine 5'-phosphate oxidase.